The sequence spans 338 residues: Ketol-acid reductoisomerase (NADP(+)) (338 aa).

Positions Met1–Thr181 constitute a KARI N-terminal Rossmann domain. Residues Tyr24–Gln27, Arg47, and Ser52 each bind NADP(+). Residue His107 is part of the active site. Gly133 lines the NADP(+) pocket. The KARI C-terminal knotted domain maps to Asp182 to Ile327. Mg(2+)-binding residues include Asp190, Glu194, Glu226, and Glu230. Ser251 is a substrate binding site.

The protein belongs to the ketol-acid reductoisomerase family. It depends on Mg(2+) as a cofactor.

It catalyses the reaction (2R)-2,3-dihydroxy-3-methylbutanoate + NADP(+) = (2S)-2-acetolactate + NADPH + H(+). The catalysed reaction is (2R,3R)-2,3-dihydroxy-3-methylpentanoate + NADP(+) = (S)-2-ethyl-2-hydroxy-3-oxobutanoate + NADPH + H(+). Its pathway is amino-acid biosynthesis; L-isoleucine biosynthesis; L-isoleucine from 2-oxobutanoate: step 2/4. The protein operates within amino-acid biosynthesis; L-valine biosynthesis; L-valine from pyruvate: step 2/4. Its function is as follows. Involved in the biosynthesis of branched-chain amino acids (BCAA). Catalyzes an alkyl-migration followed by a ketol-acid reduction of (S)-2-acetolactate (S2AL) to yield (R)-2,3-dihydroxy-isovalerate. In the isomerase reaction, S2AL is rearranged via a Mg-dependent methyl migration to produce 3-hydroxy-3-methyl-2-ketobutyrate (HMKB). In the reductase reaction, this 2-ketoacid undergoes a metal-dependent reduction by NADPH to yield (R)-2,3-dihydroxy-isovalerate. The protein is Ketol-acid reductoisomerase (NADP(+)) of Bordetella petrii (strain ATCC BAA-461 / DSM 12804 / CCUG 43448).